Reading from the N-terminus, the 357-residue chain is uncharacterized protein (357 aa).

Positions 1-19 (MKRILSFIFIILFFNSSYA) are cleaved as a signal peptide.

This is an uncharacterized protein from Rickettsia prowazekii (strain Madrid E).